Consider the following 292-residue polypeptide: Acetyl-coenzyme A carboxylase carboxyl transferase subunit beta (292 aa).

In terms of domain architecture, CoA carboxyltransferase N-terminal spans 29–292; the sequence is LWVKCSECGQ…HGVKDLMGAN (264 aa). The Zn(2+) site is built by Cys-33, Cys-36, Cys-52, and Cys-55. The segment at 33–55 adopts a C4-type zinc-finger fold; that stretch reads CSECGQVAYRKDLISNFNVCSNC.

The protein belongs to the AccD/PCCB family. Acetyl-CoA carboxylase is a heterohexamer composed of biotin carboxyl carrier protein (AccB), biotin carboxylase (AccC) and two subunits each of ACCase subunit alpha (AccA) and ACCase subunit beta (AccD). Requires Zn(2+) as cofactor.

It localises to the cytoplasm. It carries out the reaction N(6)-carboxybiotinyl-L-lysyl-[protein] + acetyl-CoA = N(6)-biotinyl-L-lysyl-[protein] + malonyl-CoA. The protein operates within lipid metabolism; malonyl-CoA biosynthesis; malonyl-CoA from acetyl-CoA: step 1/1. Functionally, component of the acetyl coenzyme A carboxylase (ACC) complex. Biotin carboxylase (BC) catalyzes the carboxylation of biotin on its carrier protein (BCCP) and then the CO(2) group is transferred by the transcarboxylase to acetyl-CoA to form malonyl-CoA. The chain is Acetyl-coenzyme A carboxylase carboxyl transferase subunit beta from Prochlorococcus marinus (strain MIT 9515).